A 585-amino-acid polypeptide reads, in one-letter code: Zinc finger protein 732 (585 aa).

One can recognise a KRAB domain in the interval 4 to 75 (LTFRDVAIEF…KIHETVAKHP (72 aa)). A C2H2-type 1; degenerate zinc finger spans residues 141–163 (FQCNVHVKVFSTFSNSNQRRIRH). The C2H2-type 2; degenerate zinc finger occupies 167–189 (KHFKECGKSFQKFSDLTQHQGIH). The C2H2-type 3; degenerate zinc finger occupies 195–217 (YTCEECGKDFKWYLIFNEYEIIH). The C2H2-type 4 zinc-finger motif lies at 223-244 (FTCEECGNIFTTSSNFAKHKVH). The segment at 250–272 (YKYEECGKAFNRSSTLTKHKRIH) adopts a C2H2-type 5; degenerate zinc-finger fold. 9 consecutive C2H2-type zinc fingers follow at residues 278–300 (FTCE…KKIH), 306–328 (YKCQ…NRIH), 334–356 (YTCE…KRIH), 362–384 (YKCE…KSIH), 390–412 (YTCE…KRIH), 418–440 (HKCE…KIIH), 446–468 (YKCE…KKIH), 474–496 (YRCE…KTIH), and 502–524 (YECE…KKIH). A C2H2-type 15; degenerate zinc finger spans residues 530–552 (YRCEECGKAFRRSRVLNKYKTIH). Residues 558 to 580 (PKCKGCGKAFKWSSYLNQHNKIY) form a C2H2-type 16; degenerate zinc finger.

It belongs to the krueppel C2H2-type zinc-finger protein family.

The protein localises to the nucleus. Its function is as follows. May be involved in transcriptional regulation. The polypeptide is Zinc finger protein 732 (ZNF732) (Homo sapiens (Human)).